The primary structure comprises 452 residues: 3-phosphoshikimate 1-carboxyvinyltransferase (452 aa).

Positions 1–17 (MSHAAAAKPATARKSQA) are enriched in low complexity. The segment at 1–26 (MSHAAAAKPATARKSQALSGTARVPG) is disordered. Lys28, Ser29, and Arg33 together coordinate 3-phosphoshikimate. Position 28 (Lys28) interacts with phosphoenolpyruvate. Phosphoenolpyruvate-binding residues include Gly100 and Arg128. The 3-phosphoshikimate site is built by Ser174, Gln176, Asp327, and Lys354. Gln176 contacts phosphoenolpyruvate. Residue Asp327 is the Proton acceptor of the active site. Phosphoenolpyruvate-binding residues include Arg358 and Arg409.

It belongs to the EPSP synthase family. Monomer.

It localises to the cytoplasm. It catalyses the reaction 3-phosphoshikimate + phosphoenolpyruvate = 5-O-(1-carboxyvinyl)-3-phosphoshikimate + phosphate. It participates in metabolic intermediate biosynthesis; chorismate biosynthesis; chorismate from D-erythrose 4-phosphate and phosphoenolpyruvate: step 6/7. Its function is as follows. Catalyzes the transfer of the enolpyruvyl moiety of phosphoenolpyruvate (PEP) to the 5-hydroxyl of shikimate-3-phosphate (S3P) to produce enolpyruvyl shikimate-3-phosphate and inorganic phosphate. This is 3-phosphoshikimate 1-carboxyvinyltransferase from Mesorhizobium japonicum (strain LMG 29417 / CECT 9101 / MAFF 303099) (Mesorhizobium loti (strain MAFF 303099)).